A 635-amino-acid chain; its full sequence is MPIQILPPQLANQIAAGEVVERPASVVKELVENSLDAGATRIDIDIERGGAKLIRIRDNGCGISKDDLALALARHATSKISSLEDLEAILSMGFRGEALASISSVSRLILTSRTAEQSEAWQAYAEGRDMAVTIKPAAHPVGSTLEVLDLFYNTPARRKFMRTEKTEFGHIDEVVRRIALARFDVAINLNHNGKLIRQYRAAPDPAQHERRLASICGPAFLQHALAIAWQHGDLNIHGWVADPAASHTLSEMQYCYVNNRMMRDRLINHAIRQAYQDRLNDAQQPAYVLYLDIDPHQVDVNVHPAKHEVRFHQARLVHDFIYQAVTAVLQQTNAPILNISEEGEVDAPRWQQENRVAAGTNKYAQPEAAKSSAAEQAVARERSSARERAAPAYKEDHPYQKQQGELYRQLLQPSAAAKPATSPAAIPASSVSSPSIPVQRITQAEEPLHGDNYSFGRVLTVFPPCYALIEYQGGVALLSLAVAERWLKQAQLSPPEEGLRPQPLLIPLKITLDKNEIAACQNHEKLLITMGIELSVEQGRATLRAVSLPLRQQNLQKLIPELLGYLSQHEEISPDTLATWLARHLGSEHEVWNVSQAIQLLTEVERLCPQLVQSPPAGLLQPIDIKAALATLTHE.

The interval Gly-359–Tyr-399 is disordered. Residues Ala-364 to Ala-377 are compositionally biased toward low complexity. Residues Val-378–Tyr-399 are compositionally biased toward basic and acidic residues.

The protein belongs to the DNA mismatch repair MutL/HexB family.

Its function is as follows. This protein is involved in the repair of mismatches in DNA. It is required for dam-dependent methyl-directed DNA mismatch repair. May act as a 'molecular matchmaker', a protein that promotes the formation of a stable complex between two or more DNA-binding proteins in an ATP-dependent manner without itself being part of a final effector complex. This is DNA mismatch repair protein MutL from Yersinia pestis bv. Antiqua (strain Antiqua).